We begin with the raw amino-acid sequence, 755 residues long: Dynamin-1-like protein (755 aa).

M1 bears the N-acetylmethionine mark. The region spanning 22–315 (IIQLPQIVVV…LMHHIRDCLP (294 aa)) is the Dynamin-type G domain. The segment at 32 to 39 (GTQSSGKS) is G1 motif. 32–40 (GTQSSGKSS) is a GTP binding site. Residues 58–60 (VTR) form a G2 motif region. The segment at 159–162 (DLPG) is G3 motif. The segment at 228 to 231 (TKLD) is G4 motif. Residues 228–234 (TKLDLMD) and 259–262 (NRSQ) each bind GTP. The G5 motif stretch occupies residues 258-261 (VNRS). Residues 357–502 (YCNTIEGTAK…NEMVHNLVAI (146 aa)) are middle domain. The segment at 461–704 (NYSTQELLRF…NHVKDTLQSE (244 aa)) is interaction with GSK3B. The b domain stretch occupies residues 515-582 (ADACGLMNNN…IQDNRRETKN (68 aa)). The tract at residues 536–610 (ELPSAVSRDK…QEPTTGNWRG (75 aa)) is disordered. S542 bears the Phosphoserine mark. Glycyl lysine isopeptide (Lys-Gly) (interchain with G-Cter in SUMO) cross-links involve residues K545 and K548. Residues 550-567 (PSALAPASQEPSPAASAE) are compositionally biased toward low complexity. S561 carries the phosphoserine modification. Residues 568–581 (ADGKLIQDNRRETK) are compositionally biased toward basic and acidic residues. Glycyl lysine isopeptide (Lys-Gly) (interchain with G-Cter in SUMO) cross-links involve residues K571 and K581. Gly residues predominate over residues 586–600 (AGGGIGDGGRIGDGG). Residues T604 and T605 are each glycosylated (O-linked (GlcNAc) threonine). Residue K613 forms a Glycyl lysine isopeptide (Lys-Gly) (interchain with G-Cter in SUMO) linkage. Residue K616 is modified to N6-acetyllysine; alternate. K616 participates in a covalent cross-link: Glycyl lysine isopeptide (Lys-Gly) (interchain with G-Cter in SUMO); alternate. Residue K625 forms a Glycyl lysine isopeptide (Lys-Gly) (interchain with G-Cter in SUMO) linkage. Phosphoserine is present on S626. K627 is covalently cross-linked (Glycyl lysine isopeptide (Lys-Gly) (interchain with G-Cter in SUMO)). S635 is subject to Phosphoserine; by CDK1. S656 carries the phosphoserine; by CAMK1 and PKA modification. At C663 the chain carries S-nitrosocysteine. The 92-residue stretch at 663 to 754 (CEVIERLIKS…IIAEIRETHL (92 aa)) folds into the GED domain. Residues 673–687 (YFLIVRKNIQDSVPK) are important for homodimerization.

Belongs to the TRAFAC class dynamin-like GTPase superfamily. Dynamin/Fzo/YdjA family. As to quaternary structure, homotetramer; dimerizes through the N-terminal GTP-middle region of one molecule binding to the GED domain of another DNM1L molecule. Oligomerizes in a GTP-dependent manner to form membrane-associated tubules with a spiral pattern. Interacts with GSK3B and MARCHF5. Interacts (via the GTPase and B domains) with UBE2I; the interaction promotes sumoylation of DNM1L, mainly in its B domain. Interacts with PPP3CA; the interaction dephosphorylates DNM1L and regulates its transition to mitochondria. Interacts with BCL2L1 isoform BCL-X(L) and CLTA; DNM1L and BCL2L1 isoform BCL-X(L) may form a complex in synaptic vesicles that also contains clathrin and MFF. Interacts with MFF; the interaction is inhinited by C11orf65/MFI. Interacts with FIS1. Interacts with MIEF2 and MIEF1; GTP-dependent this regulates GTP hydrolysis and DNM1L oligomerization. Interacts with PGAM5; this interaction leads to dephosphorylation at Ser-656 and activation of GTPase activity and eventually to mitochondria fragmentation. Interacts with RALBP1; during mitosis, recruits DNM1L to the mitochondrion and mediates its activation by the mitotic kinase cyclin B-CDK1. Interacts with FUNDC1; this interaction recruits DNM1L/DRP1 at ER-mitochondria contact sites. Phosphorylation/dephosphorylation events on two sites near the GED domain regulate mitochondrial fission. Phosphorylation on Ser-656 by CAMK1 and PKA inhibits the GTPase activity, leading to a defect in mitochondrial fission promoting mitochondrial elongation. Dephosphorylated on this site by PPP3CA which promotes mitochondrial fission. Phosphorylation on Ser-635 by PINK1 activates the GTPase activity and promotes mitochondrial fission. Phosphorylation on Ser-635 by CDK1 also promotes mitochondrial fission. Phosphorylated in a circadian manner at Ser-656. Dephosphorylated by PGAM5. In terms of processing, sumoylated on various lysine residues within the B domain, probably by MUL1. Sumoylation positively regulates mitochondrial fission. Desumoylated by SENP5 during G2/M transition of mitosis. Appears to be linked to its catalytic activity. Post-translationally, S-nitrosylation increases DNM1L dimerization, mitochondrial fission and causes neuronal damage. O-GlcNAcylation augments the level of the GTP-bound active form of DNM1L and induces translocation from the cytoplasm to mitochondria in cardiomyocytes. It also decreases phosphorylation at Ser-656. In terms of processing, ubiquitination by MARCHF5 affects mitochondrial morphology. In terms of tissue distribution, expressed in all tissues tested (at protein level). Longer isoforms are preferentially expressed in brain.

It is found in the cytoplasm. The protein localises to the cytosol. Its subcellular location is the golgi apparatus. The protein resides in the endomembrane system. It localises to the mitochondrion outer membrane. It is found in the peroxisome. The protein localises to the membrane. Its subcellular location is the clathrin-coated pit. The protein resides in the cytoplasmic vesicle. It localises to the secretory vesicle. It is found in the synaptic vesicle membrane. The catalysed reaction is GTP + H2O = GDP + phosphate + H(+). In terms of biological role, functions in mitochondrial and peroxisomal division. Mediates membrane fission through oligomerization into membrane-associated tubular structures that wrap around the scission site to constrict and sever the mitochondrial membrane through a GTP hydrolysis-dependent mechanism. The specific recruitment at scission sites is mediated by membrane receptors like MFF, MIEF1 and MIEF2 for mitochondrial membranes. While the recruitment by the membrane receptors is GTP-dependent, the following hydrolysis of GTP induces the dissociation from the receptors and allows DNM1L filaments to curl into closed rings that are probably sufficient to sever a double membrane. Acts downstream of PINK1 to promote mitochondrial fission in a PRKN-dependent manner. Plays an important role in mitochondrial fission during mitosis. Through its function in mitochondrial division, ensures the survival of at least some types of postmitotic neurons, including Purkinje cells, by suppressing oxidative damage. Required for normal brain development, including that of cerebellum. Facilitates developmentally regulated apoptosis during neural tube formation. Required for a normal rate of cytochrome c release and caspase activation during apoptosis; this requirement may depend upon the cell type and the physiological apoptotic cues. Required for formation of endocytic vesicles. Proposed to regulate synaptic vesicle membrane dynamics through association with BCL2L1 isoform Bcl-X(L) which stimulates its GTPase activity in synaptic vesicles; the function may require its recruitment by MFF to clathrin-containing vesicles. Required for programmed necrosis execution. Rhythmic control of its activity following phosphorylation at Ser-656 is essential for the circadian control of mitochondrial ATP production. The sequence is that of Dynamin-1-like protein from Rattus norvegicus (Rat).